Consider the following 486-residue polypeptide: Mogroside I-E synthase (486 aa).

Residues Ser302, Cys360, Gln362, Trp380, Asn381, Ser382, Glu385, Asp401, and Gln402 each coordinate UDP-alpha-D-glucose.

This sequence belongs to the UDP-glycosyltransferase family. In terms of tissue distribution, highly expressed in young fruits 15 days after anthesis (15-DAA).

The enzyme catalyses mogrol + UDP-alpha-D-glucose = mogroside IE + UDP + H(+). It carries out the reaction mogroside I-A1 + UDP-alpha-D-glucose = mogroside IIE + UDP + H(+). It catalyses the reaction mogroside II-A1 + UDP-alpha-D-glucose = mogroside IIIX + UDP + H(+). The catalysed reaction is mogroside II-A + UDP-alpha-D-glucose = mogroside III + UDP + H(+). Its pathway is secondary metabolite biosynthesis; terpenoid biosynthesis. In terms of biological role, UDP-glycosyltransferase involved in the biosynthesis of cucurbitacin and mogroside tetracyclic triterpene natural products (e.g. siamenoside I and mogrosides IV, V and VI). Cucurbitacins have cytotoxic properties and exhibit deterrent taste as a defense barrier against herbivores. Mogrosides are nonsugar highly oxygenated compounds used as high-intensity zero-calorie sweeteners; they also possess pharmacological properties such as regulating immunity, lowering blood sugar and lipid levels, protecting the liver, and acting as antioxidants and antitumor agents. Catalyzes the C3 primary glucosylation of mogrol, mogroside I-A1, mogroside II-A1 and mogroside II-A. In Siraitia grosvenorii (Monk's fruit), this protein is Mogroside I-E synthase.